We begin with the raw amino-acid sequence, 463 residues long: UDP-N-acetylmuramoyl-L-alanyl-D-glutamate--2,6-diaminopimelate ligase (463 aa).

Thr21 is a binding site for UDP-N-acetyl-alpha-D-muramoyl-L-alanyl-D-glutamate. ATP is bound at residue 94–100 (GTNGKTT). UDP-N-acetyl-alpha-D-muramoyl-L-alanyl-D-glutamate-binding positions include 137–138 (TT), Ser164, Gln170, and Arg172. Lys204 carries the post-translational modification N6-carboxylysine. Meso-2,6-diaminopimelate is bound by residues Arg358, 382-385 (DNPR), Gly433, and Glu437. The short motif at 382-385 (DNPR) is the Meso-diaminopimelate recognition motif element.

This sequence belongs to the MurCDEF family. MurE subfamily. Mg(2+) is required as a cofactor. Post-translationally, carboxylation is probably crucial for Mg(2+) binding and, consequently, for the gamma-phosphate positioning of ATP.

It localises to the cytoplasm. The enzyme catalyses UDP-N-acetyl-alpha-D-muramoyl-L-alanyl-D-glutamate + meso-2,6-diaminopimelate + ATP = UDP-N-acetyl-alpha-D-muramoyl-L-alanyl-gamma-D-glutamyl-meso-2,6-diaminopimelate + ADP + phosphate + H(+). It functions in the pathway cell wall biogenesis; peptidoglycan biosynthesis. Catalyzes the addition of meso-diaminopimelic acid to the nucleotide precursor UDP-N-acetylmuramoyl-L-alanyl-D-glutamate (UMAG) in the biosynthesis of bacterial cell-wall peptidoglycan. The protein is UDP-N-acetylmuramoyl-L-alanyl-D-glutamate--2,6-diaminopimelate ligase of Helicobacter hepaticus (strain ATCC 51449 / 3B1).